We begin with the raw amino-acid sequence, 820 residues long: MALLRDVSLQDPRDRFELLQRVGAGTYGDVYKARDTVTSELAAVKIVKLDPGDDISSLQQEITILRECRHPNVVAYIGSYLRNDRLWICMEFCGGGSLQEIYHATGPLEERQIAYVCREALKGLHHLHSQGKIHRDIKGANLLLTLQGDVKLADFGVSGELTASVAKRRSFIGTPYWMAPEVAAVERKGGYNELCDVWALGITAIELGELQPPLFHLHPMRALMLMSKSSFQPPKLRDKTRWTQNFHHFLKLALTKNPKKRPTAEKLLQHPFTTQQLPRALLTQLLDKASDPHLGTPSPEDCELETYDMFPDTIHSRGQHGPAERTPSEIQFHQVKFGAPRRKETDPLNEPWEEEWTLLGKEELSGSLLQSVQEALEERSLTIRSASEFQELDSPDDTMGTIKRAPFLGPLPTDPPAEEPLSSPPGTLPPPPSGPNSSPLLPTAWATMKQREDPERSSCHGLPPTPKVHMGACFSKVFNGCPLRIHAAVTWIHPVTRDQFLVVGAEEGIYTLNLHELHEDTLEKLISHRCSWLYCVNNVLLSLSGKSTHIWAHDLPGLFEQRRLQQQVPLSIPTNRLTQRIIPRRFALSTKIPDTKGCLQCRVVRNPYTGATFLLAALPTSLLLLQWYEPLQKFLLLKNFSSPLPSPAGMLEPLVLDGKELPQVCVGAEGPEGPGCRVLFHVLPLEAGLTPDILIPPEGIPGSAQQVIQVDRDTILVSFERCVRIVNMQGEPTATLAPELTFDFPIETVVCLQDSVLAFWSHGMQGRSLDTNEVTQEITDETRIFRVLGAHRDIILESIPTDNPEAHSNLYILTGHQSTY.

One can recognise a Protein kinase domain in the interval 16–273 (FELLQRVGAG…AEKLLQHPFT (258 aa)). ATP-binding positions include 22 to 30 (VGAGTYGDV) and Lys45. Residue Asp136 is the Proton acceptor of the active site. The segment at 294–314 (LGTPSPEDCELETYDMFPDTI) is PEST1. A Phosphoserine modification is found at Ser328. Residues 344–360 (ETDPLNEPWEEEWTLLG) are PEST2. The disordered stretch occupies residues 387–442 (SEFQELDSPDDTMGTIKRAPFLGPLPTDPPAEEPLSSPPGTLPPPPSGPNSSPLLP). Ser394 carries the phosphoserine modification. The interval 405–448 (APFLGPLPTDPPAEEPLSSPPGTLPPPPSGPNSSPLLPTAWATM) is PEST3. Residues 422-434 (SSPPGTLPPPPSG) show a composition bias toward pro residues. The region spanning 482–793 (PLRIHAAVTW…IFRVLGAHRD (312 aa)) is the CNH domain.

This sequence belongs to the protein kinase superfamily. STE Ser/Thr protein kinase family. STE20 subfamily. As to quaternary structure, interacts with TRAF2, TRAF6, MAP3K1/MEKK1 and MAP3K11/MLK3. Interacts with RAB8A. It depends on Mg(2+) as a cofactor. Post-translationally, polyubiquitinated through 'Lys-48'-polyubiquitin chains, allowing proteasomal turnover. Ubiquitination requires the kinase activity of MAP4K2/GCK. Autophosphorylated in response to tumor necrosis factor (TNF), endotoxins or pro-inflammatory stimuli. Autophosphorylation leads to activation. In terms of tissue distribution, highly expressed in germinal center but not mantle zone B-cells. Also expressed in lung, brain and placenta and at lower levels in other tissues examined.

The protein localises to the cytoplasm. The protein resides in the basolateral cell membrane. It is found in the golgi apparatus membrane. The catalysed reaction is L-seryl-[protein] + ATP = O-phospho-L-seryl-[protein] + ADP + H(+). The enzyme catalyses L-threonyl-[protein] + ATP = O-phospho-L-threonyl-[protein] + ADP + H(+). Its activity is regulated as follows. The tumor necrosis factor (TNF), as well as endotoxins and pro-inflammatory stimuli such as polyinosine-polycytidine (poly(IC)), lipopolysaccharides (LPS), peptidoglycan (PGN), flagellin, or lipid A activate MAP4K2 by promoting its autophosphorylation. Its function is as follows. Serine/threonine-protein kinase which acts as an essential component of the MAP kinase signal transduction pathway. Acts as a MAPK kinase kinase kinase (MAP4K) and is an upstream activator of the stress-activated protein kinase/c-Jun N-terminal kinase (SAP/JNK) signaling pathway and to a lesser extent of the p38 MAPKs signaling pathway. Required for the efficient activation of JNKs by TRAF6-dependent stimuli, including pathogen-associated molecular patterns (PAMPs) such as polyinosine-polycytidine (poly(IC)), lipopolysaccharides (LPS), lipid A, peptidoglycan (PGN), or bacterial flagellin. To a lesser degree, IL-1 and engagement of CD40 also stimulate MAP4K2-mediated JNKs activation. The requirement for MAP4K2/GCK is most pronounced for LPS signaling, and extends to LPS stimulation of c-Jun phosphorylation and induction of IL-8. Enhances MAP3K1 oligomerization, which may relieve N-terminal mediated MAP3K1 autoinhibition and lead to activation following autophosphorylation. Also mediates the SAP/JNK signaling pathway and the p38 MAPKs signaling pathway through activation of the MAP3Ks MAP3K10/MLK2 and MAP3K11/MLK3. May play a role in the regulation of vesicle targeting or fusion. regulation of vesicle targeting or fusion. Activator of the Hippo signaling pathway which plays a pivotal role in organ size control and tumor suppression by restricting proliferation and promoting apoptosis. MAP4Ks act in parallel to and are partially redundant with STK3/MST2 and STK4/MST2 in the phosphorylation and activation of LATS1/2, and establish MAP4Ks as components of the expanded Hippo pathway. The protein is Mitogen-activated protein kinase kinase kinase kinase 2 of Homo sapiens (Human).